A 62-amino-acid chain; its full sequence is Large ribosomal subunit protein bL28 (62 aa).

The protein belongs to the bacterial ribosomal protein bL28 family.

This is Large ribosomal subunit protein bL28 from Acholeplasma laidlawii (strain PG-8A).